The following is a 58-amino-acid chain: Small ribosomal subunit protein bS21 (58 aa).

Residues 28-58 (VLQDIRKHEHYEKPSIKKKKKSEAARKKKRF) are disordered. Residues 31–42 (DIRKHEHYEKPS) are compositionally biased toward basic and acidic residues. Residues 43-58 (IKKKKKSEAARKKKRF) are compositionally biased toward basic residues.

This sequence belongs to the bacterial ribosomal protein bS21 family.

This Syntrophomonas wolfei subsp. wolfei (strain DSM 2245B / Goettingen) protein is Small ribosomal subunit protein bS21.